We begin with the raw amino-acid sequence, 240 residues long: Pyridoxine 5'-phosphate synthase (240 aa).

Asn7 serves as a coordination point for 3-amino-2-oxopropyl phosphate. 9 to 10 (DH) is a 1-deoxy-D-xylulose 5-phosphate binding site. Arg18 is a 3-amino-2-oxopropyl phosphate binding site. His43 serves as the catalytic Proton acceptor. 2 residues coordinate 1-deoxy-D-xylulose 5-phosphate: Arg45 and His50. Glu70 acts as the Proton acceptor in catalysis. Position 100 (Thr100) interacts with 1-deoxy-D-xylulose 5-phosphate. His191 serves as the catalytic Proton donor. Residues Gly192 and 213 to 214 (GH) contribute to the 3-amino-2-oxopropyl phosphate site.

This sequence belongs to the PNP synthase family. Homooctamer; tetramer of dimers.

The protein resides in the cytoplasm. It carries out the reaction 3-amino-2-oxopropyl phosphate + 1-deoxy-D-xylulose 5-phosphate = pyridoxine 5'-phosphate + phosphate + 2 H2O + H(+). The protein operates within cofactor biosynthesis; pyridoxine 5'-phosphate biosynthesis; pyridoxine 5'-phosphate from D-erythrose 4-phosphate: step 5/5. Its function is as follows. Catalyzes the complicated ring closure reaction between the two acyclic compounds 1-deoxy-D-xylulose-5-phosphate (DXP) and 3-amino-2-oxopropyl phosphate (1-amino-acetone-3-phosphate or AAP) to form pyridoxine 5'-phosphate (PNP) and inorganic phosphate. This is Pyridoxine 5'-phosphate synthase from Crocosphaera subtropica (strain ATCC 51142 / BH68) (Cyanothece sp. (strain ATCC 51142)).